A 135-amino-acid polypeptide reads, in one-letter code: Large ribosomal subunit protein uL16c (135 aa).

It belongs to the universal ribosomal protein uL16 family. In terms of assembly, part of the 50S ribosomal subunit.

It is found in the plastid. It localises to the chloroplast. The polypeptide is Large ribosomal subunit protein uL16c (Drimys granadensis).